Reading from the N-terminus, the 475-residue chain is ATP-dependent protease ATPase subunit HslU1 (475 aa).

The N-terminal 27 residues, 1–27 (MMRRVTSSLPSALKLGRSLGPNVRFSG), are a transit peptide targeting the mitochondrion. ATP contacts are provided by residues isoleucine 66, 108–113 (GVGKTE), aspartate 286, glutamate 353, and arginine 425.

Belongs to the ClpX chaperone family. HslU subfamily. A double ring-shaped homohexamer of HslV is capped on each side by a ring-shaped HslU homohexamer. The assembly of the HslU/HslV complex (HslVU) is dependent on binding of ATP.

Its subcellular location is the mitochondrion matrix. The protein localises to the kinetoplast. In terms of biological role, ATPase subunit of a proteasome-like degradation complex; this subunit has chaperone activity. The binding of ATP and its subsequent hydrolysis by HslU are essential for unfolding of protein substrates subsequently hydrolyzed by HslV. HslU recognizes the N-terminal part of its protein substrates and unfolds these before they are guided to HslV for hydrolysis. The HslVU protease complex functions in mitochondrial DNA replication by regulating DNA helicase PIF2 protein levels. The protein is ATP-dependent protease ATPase subunit HslU1 (HslU1) of Trypanosoma brucei brucei (strain 927/4 GUTat10.1).